A 201-amino-acid polypeptide reads, in one-letter code: Histone chaperone asf1a-A (201 aa).

This sequence belongs to the ASF1 family. Interacts with histone H3 (including both histone H3.1 and H3.3) and histone H4. Interacts with hira and p60.

The protein resides in the nucleus. In terms of biological role, histone chaperone that facilitates histone deposition and histone exchange and removal during nucleosome assembly and disassembly. Not critical for histone deposition during nucleosome assembly. In Xenopus laevis (African clawed frog), this protein is Histone chaperone asf1a-A (asf1aa).